Here is a 155-residue protein sequence, read N- to C-terminus: Gas vesicle protein K (155 aa).

This sequence belongs to the gas vesicle GvpK family.

It localises to the gas vesicle. Functionally, might be involved in nucleating gas vesicle formation. Gas vesicles (GV) are hollow, gas filled proteinaceous nanostructures. During planktonic growth they allow positioning of the organism at a favorable depth for light or nutrient acquisition. In Dolichospermum flosaquae (Anabaena flos-aquae), this protein is Gas vesicle protein K.